The primary structure comprises 334 residues: Tryptophan--tRNA ligase (334 aa).

ATP contacts are provided by residues 11–13 and 19–20; these read QPT and GN. Positions 12–20 match the 'HIGH' region motif; that stretch reads PTGKLTIGN. Asp135 contributes to the L-tryptophan binding site. ATP contacts are provided by residues 147-149, Ile186, and 195-199; these read GED and KMSKS. Positions 195-199 match the 'KMSKS' region motif; sequence KMSKS.

Belongs to the class-I aminoacyl-tRNA synthetase family. In terms of assembly, homodimer.

The protein resides in the cytoplasm. It carries out the reaction tRNA(Trp) + L-tryptophan + ATP = L-tryptophyl-tRNA(Trp) + AMP + diphosphate + H(+). Catalyzes the attachment of tryptophan to tRNA(Trp). This Blochmanniella floridana protein is Tryptophan--tRNA ligase.